We begin with the raw amino-acid sequence, 350 residues long: MWTMGYNEGGADSFNGGRKLRPLIPRLTSCPTAAVNTNSDHRFNMAVVTMTAEQNKRELMMLNSEPQHPPVMVSSRWNPTPDQLRVLEELYRQGTRTPSADHIQQITAQLRRYGKIEGKNVFYWFQNHKARERQKRRRQMETGHEETVLSTASLVSNHGFDKKDPPGYKVEQVKNWICSVGCDTQPEKPSRDYHLEEPANIRVEHNARCGGDERRSFLGINTTWQMMQLPPSFYSSSHHHHQRNLILNSPTVSSNMSNSNNAVSASKDTVTVSPVFLRTREATNTETCHRNGDDNKDQEQHEDCSNGELDHQEQTLELFPLRKEGFCSDGEKDKNISGIHCFYEFLPLKN.

Positions 72 to 136 (MVSSRWNPTP…NHKARERQKR (65 aa)) form a DNA-binding region, homeobox; WUS-type. The disordered stretch occupies residues 283-308 (TNTETCHRNGDDNKDQEQHEDCSNGE).

It belongs to the WUS homeobox family.

It is found in the nucleus. Functionally, transcription factor which may be involved in developmental processes. The chain is WUSCHEL-related homeobox 1 (WOX1) from Arabidopsis thaliana (Mouse-ear cress).